The chain runs to 270 residues: Glutamate 5-kinase (270 aa).

Residue Lys-17 participates in ATP binding. Residues Ser-57, Asp-144, and Asn-160 each coordinate substrate. ATP contacts are provided by residues 180–181 and 222–228; these read SD and TGGMTSK.

This sequence belongs to the glutamate 5-kinase family.

The protein resides in the cytoplasm. The enzyme catalyses L-glutamate + ATP = L-glutamyl 5-phosphate + ADP. It functions in the pathway amino-acid biosynthesis; L-proline biosynthesis; L-glutamate 5-semialdehyde from L-glutamate: step 1/2. Catalyzes the transfer of a phosphate group to glutamate to form L-glutamate 5-phosphate. The chain is Glutamate 5-kinase from Lactococcus lactis subsp. lactis (strain IL1403) (Streptococcus lactis).